The primary structure comprises 1053 residues: LRR receptor-like serine/threonine-protein kinase GHR1 (1053 aa).

Residues 1 to 18 (MNLSRILLLSMFFLSAMG) form the signal peptide. Over 19-630 (QLPSQDIMAL…NKSTNKLVKV (612 aa)) the chain is Extracellular. 13 LRR repeats span residues 73–93 (GVVL…FSNL), 94–119 (TKLV…SFKS), 121–141 (QFLD…IGRS), 142–165 (VSLR…MGGL), 166–189 (ISLQ…LTRL), 191–212 (DLLY…GFEL), 213–237 (ISSL…FFLL), 239–260 (NASY…LLPG), 262–285 (SESI…GFQL), 286–309 (FQNL…FNYV), 310–333 (YDLE…LLKG), 335–357 (SLLL…SIMS), and 358–384 (TTLH…CVLL). Asparagine 92 carries an N-linked (GlcNAc...) asparagine glycan. Phosphoserine; by HT1 is present on residues serine 100 and serine 102. The N-linked (GlcNAc...) asparagine glycan is linked to asparagine 103. Serine 105 and serine 126 each carry phosphoserine; by HT1. 2 N-linked (GlcNAc...) asparagine glycosylation sites follow: asparagine 146 and asparagine 153. A glycan (N-linked (GlcNAc...) asparagine) is linked at asparagine 196. Asparagine 239 carries an N-linked (GlcNAc...) asparagine glycan. Serine 262 carries the phosphoserine; by HT1 modification. Asparagine 269 carries an N-linked (GlcNAc...) asparagine glycan. Serine 278 bears the Phosphoserine; by HT1 mark. Threonine 280 carries the post-translational modification Phosphothreonine; by HT1. Residue serine 281 is modified to Phosphoserine; by HT1. Serine 325 is subject to Phosphoserine; by HT1. The N-linked (GlcNAc...) asparagine glycan is linked to asparagine 347. Residue asparagine 394 is glycosylated (N-linked (GlcNAc...) asparagine). LRR repeat units follow at residues 401-425 (WENI…TPQL), 426-449 (LRAN…IPTH), 450-474 (YPKL…LLSM), 476-498 (TLEE…PSSG), 499-521 (SRIR…VFGS), 522-546 (LTNL…MNDI), 548-570 (SLSS…LSSN), and 572-592 (MAFN…LKNF). At tyrosine 406 the chain carries Phosphotyrosine; by HT1. Position 410 is a phosphoserine; by HT1 (serine 410). Phosphothreonine; by HT1 is present on threonine 415. Serine 417 carries the post-translational modification Phosphoserine; by HT1. Asparagine 432 carries N-linked (GlcNAc...) asparagine glycosylation. The residue at position 434 (serine 434) is a Phosphoserine; by HT1. N-linked (GlcNAc...) asparagine glycans are attached at residues asparagine 534, asparagine 566, and asparagine 575. Serine 613, serine 614, and serine 616 each carry phosphoserine; by HT1. The N-linked (GlcNAc...) asparagine glycan is linked to asparagine 621. A helical membrane pass occupies residues 631–651 (VIIVSCAVALIILILVAILLF). Residues 652–1053 (CICKSRRREE…KTIYEDLSSI (402 aa)) lie on the Cytoplasmic side of the membrane. Basic and acidic residues predominate over residues 662–671 (RSITGKETNR). Residues 662-684 (RSITGKETNRRAQTIPSGSGGGM) are disordered. Phosphothreonine; by HT1 occurs at positions 669 and 675. Serine 678, serine 680, serine 698, serine 699, and serine 700 each carry phosphoserine; by HT1. Position 704 is a phosphoserine (serine 704). Residue threonine 713 is modified to Phosphothreonine; by HT1. Phosphoserine; by HT1 is present on residues serine 716 and serine 718. Threonine 720 carries the post-translational modification Phosphothreonine; by HT1. Residues serine 721, serine 724, and serine 760 each carry the phosphoserine; by HT1 modification. Residue threonine 764 is modified to Phosphothreonine; by HT1. Serine 769 bears the Phosphoserine; by HT1 mark. The Protein kinase domain maps to 770 to 1053 (RAPAEVLGRS…KTIYEDLSSI (284 aa)). Residues 776 to 784 (LGRSSHGTS) and lysine 798 contribute to the ATP site. Threonine 928 and threonine 1010 each carry phosphothreonine; by HT1. Position 1015 is a phosphoserine; by HT1 (serine 1015). Threonine 1045 is subject to Phosphothreonine; by HT1. Tyrosine 1047 bears the Phosphotyrosine; by HT1 mark. Serine 1051 and serine 1052 each carry phosphoserine; by HT1.

The protein belongs to the protein kinase superfamily. Ser/Thr protein kinase family. As to quaternary structure, interacts with SLAC1 (via N-terminus). Binds to ABI2, but not ABI1. Interacts with CPK3. Phosphorylated by HT1; this phosphorylation is inhibited by MPK12 and MPK4. In terms of tissue distribution, expressed in guard cells and in the vasculature of roots and leaves.

The protein resides in the cell membrane. The enzyme catalyses L-seryl-[protein] + ATP = O-phospho-L-seryl-[protein] + ADP + H(+). It carries out the reaction L-threonyl-[protein] + ATP = O-phospho-L-threonyl-[protein] + ADP + H(+). With respect to regulation, negatively regulated by ABI2. Its function is as follows. Receptor kinase acting as an early component in abscisic acid (ABA) signaling. Required for darkness, ABA, high CO(2) and hydrogen peroxide (H(2)O(2)) induction of S-type anion currents in guard cells leading to stomatal closure, possibly via the phosphorylation and activation of the anion channel SLAC1 and as a scaffolding component. Seems to act in parallel with SRK2E/OST1 in the ABA signaling pathway which regulates stomatal movement. Binds ATP. Involved in the local and/or systemic stomatal responses (e.g. stomatal closure) to light stress. The sequence is that of LRR receptor-like serine/threonine-protein kinase GHR1 from Arabidopsis thaliana (Mouse-ear cress).